Reading from the N-terminus, the 502-residue chain is 4,4'-diapophytoene desaturase (4,4'-diaponeurosporene-forming) (502 aa).

5 to 17 (VIGAGVTGLAAAA) provides a ligand contact to FAD.

Belongs to the carotenoid/retinoid oxidoreductase family. CrtN subfamily.

The catalysed reaction is 15-cis-4,4'-diapophytoene + 3 FAD + 3 H(+) = all-trans-4,4'-diaponeurosporene + 3 FADH2. It participates in carotenoid biosynthesis; staphyloxanthin biosynthesis; staphyloxanthin from farnesyl diphosphate: step 2/5. Its function is as follows. Involved in the biosynthesis of the yellow-orange carotenoid staphyloxanthin, which plays a role in the virulence via its protective function against oxidative stress. Catalyzes three successive dehydrogenation reactions that lead to the introduction of three double bonds into 4,4'-diapophytoene (dehydrosqualene), with 4,4'-diapophytofluene and 4,4'-diapo-zeta-carotene as intermediates, and 4,4'-diaponeurosporene (the major deep-yellow pigment in staphylococci strains) as the end product. This chain is 4,4'-diapophytoene desaturase (4,4'-diaponeurosporene-forming), found in Staphylococcus aureus (strain COL).